The following is a 91-amino-acid chain: UPF0728 protein v1g117062 (91 aa).

The protein belongs to the UPF0728 family.

This chain is UPF0728 protein v1g117062, found in Nematostella vectensis (Starlet sea anemone).